The following is a 343-amino-acid chain: Phosphate acyltransferase (343 aa).

The protein belongs to the PlsX family. Homodimer. Probably interacts with PlsY.

It localises to the cytoplasm. It carries out the reaction a fatty acyl-[ACP] + phosphate = an acyl phosphate + holo-[ACP]. It functions in the pathway lipid metabolism; phospholipid metabolism. Its function is as follows. Catalyzes the reversible formation of acyl-phosphate (acyl-PO(4)) from acyl-[acyl-carrier-protein] (acyl-ACP). This enzyme utilizes acyl-ACP as fatty acyl donor, but not acyl-CoA. This Acidovorax sp. (strain JS42) protein is Phosphate acyltransferase.